Reading from the N-terminus, the 461-residue chain is Tip elongation protein 1 (461 aa).

In terms of domain architecture, CAP-Gly spans glycine 22–proline 69. Phosphoserine occurs at positions 82, 84, 289, 294, and 305. The stretch at threonine 134 to glutamate 418 forms a coiled coil. Over residues lysine 278–phenylalanine 303 the composition is skewed to polar residues. A disordered region spans residues lysine 278 to arginine 323. The residue at position 367 (threonine 367) is a Phosphothreonine. The tract at residues leucine 417–tryptophan 437 is disordered.

As to quaternary structure, monomer. Interacts with tea1 and tea2. Interacts with tea4 in the presence of tea1.

It localises to the cytoplasm. It is found in the cytoskeleton. Has a role in stabilizing and targeting the growing tips of the microtubules along the long axis of the cell, directing them to the ends of the cell. Acts as a cargo for tea2. This is Tip elongation protein 1 (tip1) from Schizosaccharomyces pombe (strain 972 / ATCC 24843) (Fission yeast).